Consider the following 205-residue polypeptide: Guanylate kinase (205 aa).

Residues 17-195 enclose the Guanylate kinase-like domain; that stretch reads PRLTVLSGPS…VSRELLALML (179 aa). ATP is bound at residue 24–31; sequence GPSGVGKS.

The protein belongs to the guanylate kinase family.

It localises to the cytoplasm. The enzyme catalyses GMP + ATP = GDP + ADP. Its function is as follows. Essential for recycling GMP and indirectly, cGMP. In Streptomyces kasugaensis, this protein is Guanylate kinase.